Consider the following 130-residue polypeptide: Large ribosomal subunit protein bL17 (130 aa).

This sequence belongs to the bacterial ribosomal protein bL17 family. Part of the 50S ribosomal subunit. Contacts protein L32.

The polypeptide is Large ribosomal subunit protein bL17 (Delftia acidovorans (strain DSM 14801 / SPH-1)).